The following is a 221-amino-acid chain: Ribonuclease P protein subunit p29 (221 aa).

Ser-10 is subject to Phosphoserine.

The protein belongs to the eukaryotic/archaeal RNase P protein component 1 family. In terms of assembly, component of nuclear RNase P and RNase MRP ribonucleoproteins. RNase P consists of a catalytic RNA moiety and 10 different protein chains; POP1, POP4, POP5, POP7, RPP14, RPP21, RPP25, RPP30, RPP38 and RPP40. Within the RNase P complex, POP1, POP7 and RPP25 form the 'finger' subcomplex, POP5, RPP14, RPP40 and homodimeric RPP30 form the 'palm' subcomplex, and RPP21, POP4 and RPP38 form the 'wrist' subcomplex. All subunits of the RNase P complex interact with the catalytic RNA. Several subunits of RNase P are also part of the RNase MRP complex. RNase MRP consists of a catalytic RNA moiety and about 8 protein subunits; POP1, POP7, RPP25, RPP30, RPP38, RPP40 and possibly also POP4 and POP5.

The protein localises to the nucleus. The protein resides in the nucleolus. In terms of biological role, component of ribonuclease P, a ribonucleoprotein complex that generates mature tRNA molecules by cleaving their 5'-ends. This is Ribonuclease P protein subunit p29 (Pop4) from Mus musculus (Mouse).